Consider the following 189-residue polypeptide: Peptidyl-tRNA hydrolase (189 aa).

A tRNA-binding site is contributed by Y14. Catalysis depends on H19, which acts as the Proton acceptor. TRNA contacts are provided by F64, N66, and N112.

This sequence belongs to the PTH family. As to quaternary structure, monomer.

It is found in the cytoplasm. It carries out the reaction an N-acyl-L-alpha-aminoacyl-tRNA + H2O = an N-acyl-L-amino acid + a tRNA + H(+). Hydrolyzes ribosome-free peptidyl-tRNAs (with 1 or more amino acids incorporated), which drop off the ribosome during protein synthesis, or as a result of ribosome stalling. Its function is as follows. Catalyzes the release of premature peptidyl moieties from peptidyl-tRNA molecules trapped in stalled 50S ribosomal subunits, and thus maintains levels of free tRNAs and 50S ribosomes. The sequence is that of Peptidyl-tRNA hydrolase from Sphingopyxis alaskensis (strain DSM 13593 / LMG 18877 / RB2256) (Sphingomonas alaskensis).